Here is a 288-residue protein sequence, read N- to C-terminus: UPF0276 protein VP3015 (288 aa).

The protein belongs to the UPF0276 family.

The polypeptide is UPF0276 protein VP3015 (Vibrio parahaemolyticus serotype O3:K6 (strain RIMD 2210633)).